Here is a 73-residue protein sequence, read N- to C-terminus: Putative sulfur carrier protein AF_0556 (73 aa).

The Cysteine persulfide intermediate role is filled by Cys11.

The protein belongs to the sulfur carrier protein TusA family.

In Archaeoglobus fulgidus (strain ATCC 49558 / DSM 4304 / JCM 9628 / NBRC 100126 / VC-16), this protein is Putative sulfur carrier protein AF_0556.